The sequence spans 423 residues: Putative competence-damage inducible protein (423 aa).

This sequence belongs to the CinA family.

This chain is Putative competence-damage inducible protein, found in Streptococcus pyogenes serotype M49 (strain NZ131).